The sequence spans 575 residues: Guanine nucleotide-binding protein-like 3-like protein (575 aa).

Residues 1–30 show a composition bias toward basic residues; that stretch reads MMKLRHKNKKPGKGSKGCKKPAKQNGKKAA. The interval 1 to 75 is disordered; sequence MMKLRHKNKK…AAREQERHRR (75 aa). The segment at 9 to 28 is required for nucleolar localization; that stretch reads KKPGKGSKGCKKPAKQNGKK. Residues 42–72 are compositionally biased toward basic and acidic residues; that stretch reads SNDHASREAELKKKRVGEMREKQQAAREQER. Residues 51–79 are a coiled coil; it reads ELKKKRVGEMREKQQAAREQERHRRRTIE. The CP-type G domain maps to 118-303; it reads YKEFHKVVEY…LLDAPGIVPG (186 aa). Residues 166–169, 252–259, and 296–299 contribute to the GTP site; these read NKID, GLPNVGKS, and DAPG. Lys-470 is covalently cross-linked (Glycyl lysine isopeptide (Lys-Gly) (interchain with G-Cter in SUMO1)).

This sequence belongs to the TRAFAC class YlqF/YawG GTPase family. In terms of assembly, interacts with MDM2; this interaction, which occurs in the nucleoplasm, stabilizes MDM2. Indirectly interacts with TP53, via MDM2-binding. Interacts with TERF1; this interaction probably occurs in the nucleoplasm and is increased during mitosis, when the nucleolus is disassembled. This binding may promote TERF1 homodimerization. Interacts with TERT.

It is found in the nucleus. Its subcellular location is the nucleolus. Functionally, stabilizes TERF1 telomeric association by preventing TERF1 recruitment by PML. Stabilizes TERF1 protein by preventing its ubiquitination and hence proteasomal degradation. Does so by interfering with TERF1-binding to FBXO4 E3 ubiquitin-protein ligase. Required for cell proliferation. By stabilizing TRF1 protein during mitosis, promotes metaphase-to-anaphase transition. Stabilizes MDM2 protein by preventing its ubiquitination, and hence proteasomal degradation. By acting on MDM2, may affect TP53 activity. Required for normal processing of ribosomal pre-rRNA. Binds GTP. The chain is Guanine nucleotide-binding protein-like 3-like protein (GNL3L) from Bos taurus (Bovine).